Consider the following 528-residue polypeptide: Tyrosine--tRNA ligase, cytoplasmic (528 aa).

Met-1 carries the post-translational modification N-acetylmethionine. Gly-2 is modified (N-acetylglycine; in Tyrosine--tRNA ligase, cytoplasmic, N-terminally processed). Residue Tyr-39 coordinates L-tyrosine. A trans-resveratrol-binding site is contributed by Tyr-39. The 'HIGH' region signature appears at 44 to 52 (TTGKPHVAY). L-tyrosine is bound by residues Tyr-166, Gln-170, Asp-173, and Gln-188. Trans-resveratrol contacts are provided by Gln-170 and Asp-173. Lys-197 is subject to N6-acetyllysine. Residue Ser-205 is modified to Phosphoserine. The residue at position 206 (Lys-206) is an N6-acetyllysine. Positions 222–226 (KMSSS) match the 'KMSKS' region motif. The Nuclear localization signal motif lies at 242–247 (KKKLKK). The segment at 339 to 363 (AAYPDPSKQKPTAKGPAKSSEPEEI) is disordered. Residues 364 to 468 (IPSRLDIRVG…AGSAPGERVF (105 aa)) enclose the tRNA-binding domain. Ser-386 is subject to Phosphoserine. N6-acetyllysine is present on residues Lys-474, Lys-482, and Lys-490.

It belongs to the class-I aminoacyl-tRNA synthetase family. Homodimer. Interacts (when binding to resveratrol) with PARP1; interaction stimulates the poly-ADP-ribosyltransferase activity of PARP1.

It localises to the cytoplasm. Its subcellular location is the nucleus. It carries out the reaction tRNA(Tyr) + L-tyrosine + ATP = L-tyrosyl-tRNA(Tyr) + AMP + diphosphate + H(+). Resveratrol strongly inhibits the tyrosine--tRNA ligase activity. Functionally, tyrosine--tRNA ligase that catalyzes the attachment of tyrosine to tRNA(Tyr) in a two-step reaction: tyrosine is first activated by ATP to form Tyr-AMP and then transferred to the acceptor end of tRNA(Tyr). Also acts as a positive regulator of poly-ADP-ribosylation in the nucleus, independently of its tyrosine--tRNA ligase activity. Activity is switched upon resveratrol-binding: resveratrol strongly inhibits the tyrosine--tRNA ligase activity and promotes relocalization to the nucleus, where YARS1 specifically stimulates the poly-ADP-ribosyltransferase activity of PARP1. This Rattus norvegicus (Rat) protein is Tyrosine--tRNA ligase, cytoplasmic (Yars1).